The sequence spans 326 residues: Beta-ketoacyl-[acyl-carrier-protein] synthase III (326 aa).

Active-site residues include Cys-120 and His-253. Positions 254-258 are ACP-binding; it reads QANIR. The active site involves Asn-283.

Belongs to the thiolase-like superfamily. FabH family. Homodimer.

The protein resides in the cytoplasm. The enzyme catalyses malonyl-[ACP] + acetyl-CoA + H(+) = 3-oxobutanoyl-[ACP] + CO2 + CoA. The protein operates within lipid metabolism; fatty acid biosynthesis. Its function is as follows. Catalyzes the condensation reaction of fatty acid synthesis by the addition to an acyl acceptor of two carbons from malonyl-ACP. Catalyzes the first condensation reaction which initiates fatty acid synthesis and may therefore play a role in governing the total rate of fatty acid production. Possesses both acetoacetyl-ACP synthase and acetyl transacylase activities. Its substrate specificity determines the biosynthesis of branched-chain and/or straight-chain of fatty acids. The sequence is that of Beta-ketoacyl-[acyl-carrier-protein] synthase III from Ralstonia pickettii (strain 12J).